Consider the following 216-residue polypeptide: Thymidylate kinase (216 aa).

Residue 10–17 coordinates ATP; it reads GPDGAGKS.

Belongs to the thymidylate kinase family.

The enzyme catalyses dTMP + ATP = dTDP + ADP. Phosphorylation of dTMP to form dTDP in both de novo and salvage pathways of dTTP synthesis. This Lactobacillus acidophilus (strain ATCC 700396 / NCK56 / N2 / NCFM) protein is Thymidylate kinase.